Here is a 202-residue protein sequence, read N- to C-terminus: Riboflavin synthase (202 aa).

2 Lumazine-binding repeats span residues 1-101 (MFTG…MGGH) and 102-198 (LVFG…ARLA). Residues 4–6 (GII), 47–49 (CLT), 66–68 (EAW), 105–107 (GHV), Lys-140, 149–151 (SLT), and 163–168 (LLIRHS) each bind 2,4-dihydroxypteridine.

In terms of assembly, homotrimer.

It catalyses the reaction 2 6,7-dimethyl-8-(1-D-ribityl)lumazine + H(+) = 5-amino-6-(D-ribitylamino)uracil + riboflavin. It participates in cofactor biosynthesis; riboflavin biosynthesis; riboflavin from 2-hydroxy-3-oxobutyl phosphate and 5-amino-6-(D-ribitylamino)uracil: step 2/2. Is inhibited by riboflavin. Product inhibition may be the major mechanism by which RS regulates its enzymatic activity in vivo. Functionally, catalyzes the dismutation of two molecules of 6,7-dimethyl-8-ribityllumazine, resulting in the formation of riboflavin and 5-amino-6-(D-ribitylamino)uracil. This Brucella abortus (strain 2308) protein is Riboflavin synthase.